The following is a 947-amino-acid chain: Bifunctional glutamine synthetase adenylyltransferase/adenylyl-removing enzyme (947 aa).

Residues 1–440 (MTPLSSPLSQ…VFNELIGDDE (440 aa)) form an adenylyl removase region. The segment at 450–947 (SEPWREVWQD…ASWRKWLVAV (498 aa)) is adenylyl transferase.

The protein belongs to the GlnE family. The cofactor is Mg(2+).

The catalysed reaction is [glutamine synthetase]-O(4)-(5'-adenylyl)-L-tyrosine + phosphate = [glutamine synthetase]-L-tyrosine + ADP. The enzyme catalyses [glutamine synthetase]-L-tyrosine + ATP = [glutamine synthetase]-O(4)-(5'-adenylyl)-L-tyrosine + diphosphate. Its function is as follows. Involved in the regulation of glutamine synthetase GlnA, a key enzyme in the process to assimilate ammonia. When cellular nitrogen levels are high, the C-terminal adenylyl transferase (AT) inactivates GlnA by covalent transfer of an adenylyl group from ATP to specific tyrosine residue of GlnA, thus reducing its activity. Conversely, when nitrogen levels are low, the N-terminal adenylyl removase (AR) activates GlnA by removing the adenylyl group by phosphorolysis, increasing its activity. The regulatory region of GlnE binds the signal transduction protein PII (GlnB) which indicates the nitrogen status of the cell. The protein is Bifunctional glutamine synthetase adenylyltransferase/adenylyl-removing enzyme of Salmonella newport (strain SL254).